The following is a 282-amino-acid chain: Keratin-associated protein 10-1 (282 aa).

24 consecutive repeat copies span residues 26-30 (CCEPH), 31-35 (CCALS), 36-40 (CCAPA), 57-61 (CCQAA), 79-83 (CCQQS), 89-93 (CCTSS), 99-103 (CCVPV), 104-108 (CCKPV), 109-113 (CCLPT), 121-125 (CCQQS), 131-135 (CCASS), 141-145 (CCVPV), 146-150 (CCKPV), 163-167 (CCQQS), 173-177 (CCTSS), 183-187 (CCVPV), 193-197 (CCKPI), 198-202 (CCVPV), 210-214 (CCQQS), 220-224 (CCTTS), 225-229 (CCRPS), 244-248 (CCMPV), 251-255 (CCAPA), and 262-266 (CCRPA). Residues 26–266 (CCEPHCCALS…SCQASCCRPA (241 aa)) are 24 X 5 AA repeats of C-C-X(3).

It belongs to the KRTAP type 10 family. As to quaternary structure, interacts with hair keratins. In terms of tissue distribution, restricted to a narrow region of the hair fiber cuticle, lying approximately 20 cell layers above the apex of the dermal papilla of the hair root; not detected in any other tissues.

In the hair cortex, hair keratin intermediate filaments are embedded in an interfilamentous matrix, consisting of hair keratin-associated proteins (KRTAP), which are essential for the formation of a rigid and resistant hair shaft through their extensive disulfide bond cross-linking with abundant cysteine residues of hair keratins. The matrix proteins include the high-sulfur and high-glycine-tyrosine keratins. This is Keratin-associated protein 10-1 (KRTAP10-1) from Homo sapiens (Human).